Reading from the N-terminus, the 295-residue chain is Beta-chimaerin (295 aa).

The segment at 41–91 (THNFKVHTFRGPHWCEYCANFMWGLIAQGVRCSDCGLNVHKQCSKHVPNDC) adopts a Phorbol-ester/DAG-type zinc-finger fold. The region spanning 104–295 (CDLTTLVKAH…ILIENEDVLF (192 aa)) is the Rho-GAP domain.

As to expression, found in cerebellum and testis.

The protein localises to the membrane. In the inactive state, the N terminus protrudes into the active site of the Rho-GAP domain, sterically blocking Rac binding. Phospholipid binding to the Phorbol-ester/DAG-type zinc-finger/C1 domain triggers the cooperative dissociation of these interactions, allowing the N-terminus to move out of the active site and thereby activating the enzyme. GTPase-activating protein for p21-rac. This is Beta-chimaerin (Chn2) from Rattus norvegicus (Rat).